A 358-amino-acid polypeptide reads, in one-letter code: Putative purine permease 12 (358 aa).

Helical transmembrane passes span 29–49 (WILV…SVLL), 62–82 (WIST…LSLL), 100–120 (LVWI…LYSV), 128–148 (STYS…YYYI), 153–173 (ITCL…LVSL), 189–209 (LIGC…LSLM), 235–255 (VASC…LLSV), 280–299 (LGCV…FSNL), 300–316 (ISTL…IAVF), and 320–340 (LTEV…FYIY).

The protein belongs to the purine permeases (TC 2.A.7.14) family.

It is found in the membrane. This chain is Putative purine permease 12 (PUP12), found in Arabidopsis thaliana (Mouse-ear cress).